A 98-amino-acid polypeptide reads, in one-letter code: Keratin, high sulfur matrix protein, IIIB4 (98 aa).

Ala1 carries the post-translational modification N-acetylalanine.

This sequence belongs to the KRTAP type 3 family. Interacts with wool keratins. Wool.

Functionally, in the wool cortex, wool keratin intermediate filaments are embedded in an interfilamentous matrix, consisting of hair keratin-associated proteins (KRTAP), which are essential for the formation of a rigid and resistant wool shaft through their extensive disulfide bond cross-linking with abundant cysteine residues of wool keratins. The matrix proteins include the high-sulfur and high-glycine-tyrosine keratins. This is Keratin, high sulfur matrix protein, IIIB4 from Ovis aries (Sheep).